The sequence spans 117 residues: Conotoxin vil14.3 (117 aa).

A signal peptide spans 1–22 (MGFRVLVLVVMATTSALPFTFS). Positions 23–90 (EEPGRSPFRP…FAELSVGQRR (68 aa)) are excised as a propeptide. The segment at 53 to 79 (RADGQPPDMRQPEMRRPEMRRPEVRQP) is disordered. The segment covering 62–79 (RQPEMRRPEMRRPEVRQP) has biased composition (basic and acidic residues). 2 disulfides stabilise this stretch: C96–C116 and C100–C112.

It belongs to the conotoxin R superfamily. As to expression, expressed by the venom duct.

The protein localises to the secreted. The polypeptide is Conotoxin vil14.3 (Conus villepinii (Villepin's cone)).